The sequence spans 426 residues: Pregnancy-specific beta-1-glycoprotein 9 (426 aa).

The first 34 residues, 1 to 34 (MGPLPAPSCTQRITWKGLLLTASLLNFWNPPTTA), serve as a signal peptide directing secretion. In terms of domain architecture, Ig-like V-type spans 35 to 144 (EVTIEAQPPK…IRHFTFTLYL (110 aa)). N-linked (GlcNAc...) asparagine glycans are attached at residues asparagine 104 and asparagine 111. The Cell attachment site motif lies at 127 to 129 (RGD). 3 consecutive Ig-like C2-type domains span residues 147–234 (PKPY…VTLN), 242–326 (PYIT…PVIL), and 335–410 (PRIY…KSMT). 3 disulfide bridges follow: cysteine 169–cysteine 217, cysteine 262–cysteine 310, and cysteine 354–cysteine 394. Residues asparagine 199, asparagine 268, asparagine 303, and asparagine 387 are each glycosylated (N-linked (GlcNAc...) asparagine).

This sequence belongs to the immunoglobulin superfamily. CEA family. In terms of assembly, interacts with latency-associated peptide; leading to TGFB1 activation.

The protein resides in the secreted. In terms of biological role, binds to the small latent transforming growth factor-beta complex, consisting of the N-terminal TGFB1 latency-associated peptide (LAP) and the mature form of TGFB1, thereby leading to the activation of TGFB1. The activation of TGFB1 leads to stimulation of naive CD4(+) T-cells to increase FoxP3 expression and to an increase in the number of FoxP3(+) regulatory T-cells. Induces the differentiation of a suppressive CD4(+)LAP(+)FoxP3(-) T-cell subset. Induces the secretion of TGFB1 in macrophages, but not in activated CD4(+) T-cells. May reduce the expression of several pro-inflammatory cytokines and chemokines by CD4(+) T-cells, including IL2 and IL6. The sequence is that of Pregnancy-specific beta-1-glycoprotein 9 (PSG9) from Homo sapiens (Human).